Consider the following 538-residue polypeptide: NAD(P)H-quinone oxidoreductase chain 4 1 (538 aa).

A run of 13 helical transmembrane segments spans residues 7 to 27 (FPWL…IPII), 37 to 57 (WYGL…FWHY), 88 to 108 (LSMP…FAAW), 116 to 136 (LFYG…VAQD), 137 to 157 (LLLF…LISI), 170 to 190 (FILY…ALAF), 210 to 230 (AIEL…LPIF), 244 to 264 (SAPG…YALI), 278 to 298 (FAPV…CCAF), 315 to 335 (MGFV…GAVL), 336 to 356 (QMVS…VTYE), 388 to 408 (LALP…GIAT), and 418 to 438 (VVVV…LLSM).

Belongs to the complex I subunit 4 family.

The protein resides in the cellular thylakoid membrane. The enzyme catalyses a plastoquinone + NADH + (n+1) H(+)(in) = a plastoquinol + NAD(+) + n H(+)(out). It carries out the reaction a plastoquinone + NADPH + (n+1) H(+)(in) = a plastoquinol + NADP(+) + n H(+)(out). In terms of biological role, NDH-1 shuttles electrons from NAD(P)H, via FMN and iron-sulfur (Fe-S) centers, to quinones in the respiratory chain. The immediate electron acceptor for the enzyme in this species is believed to be plastoquinone. Couples the redox reaction to proton translocation (for every two electrons transferred, four hydrogen ions are translocated across the cytoplasmic membrane), and thus conserves the redox energy in a proton gradient. The protein is NAD(P)H-quinone oxidoreductase chain 4 1 of Nostoc sp. (strain PCC 7120 / SAG 25.82 / UTEX 2576).